Consider the following 498-residue polypeptide: L-ornithine N(5)-monooxygenase (498 aa).

Residues 80–88 (ERQKQFAWH) and Gln-99 each bind FAD. Lys-104 lines the substrate pocket. An FAD-binding site is contributed by Val-165. NADP(+)-binding positions include 251–254 (SGQS) and Arg-276. Substrate contacts are provided by residues 290–293 (NEVF) and Asn-320. 320–322 (NYS) is a binding site for NADP(+). FAD is bound at residue 463–465 (SLL). Ser-466 serves as a coordination point for substrate.

The protein belongs to the lysine N(6)-hydroxylase/L-ornithine N(5)-oxygenase family. In terms of assembly, homotetramer. It depends on FAD as a cofactor.

The catalysed reaction is L-ornithine + NADPH + O2 = N(5)-hydroxy-L-ornithine + NADP(+) + H2O. The enzyme catalyses L-ornithine + NADH + O2 = N(5)-hydroxy-L-ornithine + NAD(+) + H2O. The protein operates within siderophore biosynthesis. Catalyzes the conversion of L-ornithine to N(5)-hydroxyornithine, the first step in the biosynthesis of all hydroxamate-containing siderophores, such as the secreted triacetylfusarinine C (TAFC) involved in iron uptake and the intracellular iron storage compound desferriferricrocin (DFFC). The polypeptide is L-ornithine N(5)-monooxygenase (Emericella nidulans (strain FGSC A4 / ATCC 38163 / CBS 112.46 / NRRL 194 / M139) (Aspergillus nidulans)).